The sequence spans 119 residues: Holo-[acyl-carrier-protein] synthase (119 aa).

Residues Asp5 and Glu51 each coordinate Mg(2+).

This sequence belongs to the P-Pant transferase superfamily. AcpS family. The cofactor is Mg(2+).

Its subcellular location is the cytoplasm. The enzyme catalyses apo-[ACP] + CoA = holo-[ACP] + adenosine 3',5'-bisphosphate + H(+). Its function is as follows. Transfers the 4'-phosphopantetheine moiety from coenzyme A to a Ser of acyl-carrier-protein. The chain is Holo-[acyl-carrier-protein] synthase from Helicobacter pylori (strain HPAG1).